The following is a 456-amino-acid chain: Adenylosuccinate lyase (456 aa).

N(6)-(1,2-dicarboxyethyl)-AMP is bound by residues 15-16, 90-92, and 122-123; these read RY, NHD, and TS. His171 functions as the Proton donor/acceptor in the catalytic mechanism. Residue Gln247 participates in N(6)-(1,2-dicarboxyethyl)-AMP binding. Ser295 acts as the Proton donor/acceptor in catalysis. Residues Ser296, 301-303, Asn309, Arg335, and 340-344 contribute to the N(6)-(1,2-dicarboxyethyl)-AMP site; these read KVN and STVLR.

It belongs to the lyase 1 family. Adenylosuccinate lyase subfamily. As to quaternary structure, homotetramer. Residues from neighboring subunits contribute catalytic and substrate-binding residues to each active site.

It carries out the reaction N(6)-(1,2-dicarboxyethyl)-AMP = fumarate + AMP. It catalyses the reaction (2S)-2-[5-amino-1-(5-phospho-beta-D-ribosyl)imidazole-4-carboxamido]succinate = 5-amino-1-(5-phospho-beta-D-ribosyl)imidazole-4-carboxamide + fumarate. It functions in the pathway purine metabolism; AMP biosynthesis via de novo pathway; AMP from IMP: step 2/2. The protein operates within purine metabolism; IMP biosynthesis via de novo pathway; 5-amino-1-(5-phospho-D-ribosyl)imidazole-4-carboxamide from 5-amino-1-(5-phospho-D-ribosyl)imidazole-4-carboxylate: step 2/2. Catalyzes two reactions in de novo purine nucleotide biosynthesis. Catalyzes the breakdown of 5-aminoimidazole- (N-succinylocarboxamide) ribotide (SAICAR or 2-[5-amino-1-(5-phospho-beta-D-ribosyl)imidazole-4-carboxamido]succinate) to 5-aminoimidazole-4-carboxamide ribotide (AICAR or 5-amino-1-(5-phospho-beta-D-ribosyl)imidazole-4-carboxamide) and fumarate, and of adenylosuccinate (ADS or N(6)-(1,2-dicarboxyethyl)-AMP) to adenosine monophosphate (AMP) and fumarate. The chain is Adenylosuccinate lyase (purB) from Legionella pneumophila subsp. pneumophila (strain Philadelphia 1 / ATCC 33152 / DSM 7513).